The primary structure comprises 63 residues: Small ribosomal subunit protein bS21 (63 aa).

Belongs to the bacterial ribosomal protein bS21 family.

This chain is Small ribosomal subunit protein bS21, found in Parabacteroides distasonis (strain ATCC 8503 / DSM 20701 / CIP 104284 / JCM 5825 / NCTC 11152).